The sequence spans 271 residues: Putative phosphoenolpyruvate synthase regulatory protein (271 aa).

151–158 (GVSRSGKT) is a binding site for ADP.

This sequence belongs to the pyruvate, phosphate/water dikinase regulatory protein family. PSRP subfamily.

It carries out the reaction [pyruvate, water dikinase] + ADP = [pyruvate, water dikinase]-phosphate + AMP + H(+). The catalysed reaction is [pyruvate, water dikinase]-phosphate + phosphate + H(+) = [pyruvate, water dikinase] + diphosphate. Functionally, bifunctional serine/threonine kinase and phosphorylase involved in the regulation of the phosphoenolpyruvate synthase (PEPS) by catalyzing its phosphorylation/dephosphorylation. The sequence is that of Putative phosphoenolpyruvate synthase regulatory protein from Burkholderia mallei (strain NCTC 10247).